The sequence spans 603 residues: Elongation factor 4 (603 aa).

One can recognise a tr-type G domain in the interval 6–188 (SKIRNFCIIA…QIVKKIPAPT (183 aa)). Residues 18–23 (DHGKST) and 135–138 (NKVD) each bind GTP.

The protein belongs to the TRAFAC class translation factor GTPase superfamily. Classic translation factor GTPase family. LepA subfamily.

It localises to the cell membrane. It catalyses the reaction GTP + H2O = GDP + phosphate + H(+). Required for accurate and efficient protein synthesis under certain stress conditions. May act as a fidelity factor of the translation reaction, by catalyzing a one-codon backward translocation of tRNAs on improperly translocated ribosomes. Back-translocation proceeds from a post-translocation (POST) complex to a pre-translocation (PRE) complex, thus giving elongation factor G a second chance to translocate the tRNAs correctly. Binds to ribosomes in a GTP-dependent manner. In Agathobacter rectalis (strain ATCC 33656 / DSM 3377 / JCM 17463 / KCTC 5835 / VPI 0990) (Eubacterium rectale), this protein is Elongation factor 4.